Consider the following 151-residue polypeptide: UPF0208 membrane protein YfbV (151 aa).

2 helical membrane-spanning segments follow: residues Tyr46 to Leu65 and Leu69 to Gly91.

This sequence belongs to the UPF0208 family.

Its subcellular location is the cell inner membrane. The sequence is that of UPF0208 membrane protein YfbV from Escherichia coli O1:K1 / APEC.